A 319-amino-acid polypeptide reads, in one-letter code: Dehydrogenase/reductase SDR family member 9 (319 aa).

An N-terminal signal peptide occupies residues 1–17 (MLFWVLGLLILCGFLWT). NAD(+) is bound by residues 34 to 58 (ITGC…HVIA) and Asp83. Substrate is bound at residue Ser164. Tyr176 functions as the Proton acceptor in the catalytic mechanism. Lys180 contacts NAD(+).

It belongs to the short-chain dehydrogenases/reductases (SDR) family. As to quaternary structure, homotetramer. As to expression, highly expressed in trachea and epidermis. Detected at lower levels in spinal cord, bone marrow, brain, tongue, esophagus, heart, colon, testis, placenta, lung, skeletal muscle and lymph node.

Its subcellular location is the microsome membrane. The protein resides in the endoplasmic reticulum membrane. The enzyme catalyses 3beta-hydroxy-5alpha-pregnane-20-one + NAD(+) = 5alpha-pregnane-3,20-dione + NADH + H(+). It carries out the reaction 17beta-hydroxy-5alpha-androstan-3-one + NAD(+) = 5alpha-androstan-3,17-dione + NADH + H(+). The catalysed reaction is androsterone + NAD(+) = 5alpha-androstan-3,17-dione + NADH + H(+). It catalyses the reaction 5alpha-androstane-3alpha,17beta-diol + NAD(+) = 17beta-hydroxy-5alpha-androstan-3-one + NADH + H(+). The enzyme catalyses all-trans-retinol + NAD(+) = all-trans-retinal + NADH + H(+). It carries out the reaction 3alpha-hydroxy-5alpha-pregnan-20-one + NAD(+) = 5alpha-pregnane-3,20-dione + NADH + H(+). 3-alpha-hydroxysteroid dehydrogenase that converts 3-alpha-tetrahydroprogesterone (allopregnanolone) to dihydroxyprogesterone and 3-alpha-androstanediol to dihydroxyprogesterone. Also plays a role in the biosynthesis of retinoic acid from retinaldehyde. Can utilize both NADH and NADPH. The polypeptide is Dehydrogenase/reductase SDR family member 9 (DHRS9) (Homo sapiens (Human)).